The chain runs to 86 residues: Alpha-toxin TbTx5 (86 aa).

The signal sequence occupies residues 1 to 19; the sequence is MNDFVFLVVACLLTAGTEG. Residues 21–82 enclose the LCN-type CS-alpha/beta domain; it reads KDGYPVEGDN…EPTKTNGRCK (62 aa). Disulfide bonds link Cys-31–Cys-81, Cys-35–Cys-57, Cys-43–Cys-64, and Cys-47–Cys-66. Pro-83 is modified (proline amide).

Belongs to the long (4 C-C) scorpion toxin superfamily. Sodium channel inhibitor family. Alpha subfamily. As to expression, expressed by the venom gland.

Its subcellular location is the secreted. Functionally, alpha toxins bind voltage-independently at site-3 of sodium channels (Nav) and inhibit the inactivation of the activated channels, thereby blocking neuronal transmission. The sequence is that of Alpha-toxin TbTx5 from Tityus bahiensis (Brazilian scorpion).